We begin with the raw amino-acid sequence, 149 residues long: 3-dehydroquinate dehydratase (149 aa).

Residue Tyr-26 is the Proton acceptor of the active site. Positions 77, 83, and 90 each coordinate substrate. The active-site Proton donor is the His-103. Substrate-binding positions include 104 to 105 (LS) and Arg-114.

This sequence belongs to the type-II 3-dehydroquinase family. As to quaternary structure, homododecamer.

It carries out the reaction 3-dehydroquinate = 3-dehydroshikimate + H2O. The protein operates within metabolic intermediate biosynthesis; chorismate biosynthesis; chorismate from D-erythrose 4-phosphate and phosphoenolpyruvate: step 3/7. Functionally, catalyzes a trans-dehydration via an enolate intermediate. The chain is 3-dehydroquinate dehydratase from Aeromonas hydrophila subsp. hydrophila (strain ATCC 7966 / DSM 30187 / BCRC 13018 / CCUG 14551 / JCM 1027 / KCTC 2358 / NCIMB 9240 / NCTC 8049).